Consider the following 139-residue polypeptide: MKFTQMAHANEIKRDWIVVDATDKVFGRIITEVATILRGKNKPCFTPNVDCGDFVVIINASKAKFSGKKLESKNYFTHSGYFGSTKTHKMSEMFEKNPEKLYKLATRGMLPKTTLGKEMLKKLKVYAGSEHPHTAQIKG.

The protein belongs to the universal ribosomal protein uL13 family. Part of the 50S ribosomal subunit.

This protein is one of the early assembly proteins of the 50S ribosomal subunit, although it is not seen to bind rRNA by itself. It is important during the early stages of 50S assembly. The chain is Large ribosomal subunit protein uL13 from Aliarcobacter butzleri (strain RM4018) (Arcobacter butzleri).